A 382-amino-acid polypeptide reads, in one-letter code: Solvent efflux pump periplasmic linker SrpA (382 aa).

The N-terminal stretch at 1–23 is a signal peptide; that stretch reads MRQIRSPRALRVIPLTALMLISG. A lipid anchor (N-palmitoyl cysteine) is attached at Cys-24. Cys-24 is lipidated: S-diacylglycerol cysteine. Positions 98–127 form a coiled coil; it reads RTYEAQLRRAEANRTSAQNLARRYETLLKT.

Belongs to the membrane fusion protein (MFP) (TC 8.A.1) family.

The protein resides in the cell inner membrane. Its function is as follows. The periplasmic linker protein component of an organic solvent efflux pump. Involved in export of a number of low log POW compounds including hexane (log POW 3.5), toluene (log POW 2.5) and dimethylphthalate (log POW 2.3). The solvent resistance phenotype has been postulated to depend on the operon expression level. This Pseudomonas putida (Arthrobacter siderocapsulatus) protein is Solvent efflux pump periplasmic linker SrpA (srpA).